Consider the following 60-residue polypeptide: MADESKFDQFKGNVKETVGNVTDNKELEKEGQQDKATGKAKEVVENAKNKITDAIDKLKK.

The interval 18 to 41 (VGNVTDNKELEKEGQQDKATGKAK) is disordered. The segment covering 23-41 (DNKELEKEGQQDKATGKAK) has biased composition (basic and acidic residues).

Belongs to the UPF0337 (CsbD) family.

The chain is UPF0337 protein SAV1625 from Staphylococcus aureus (strain Mu50 / ATCC 700699).